A 357-amino-acid polypeptide reads, in one-letter code: MAIDENKQKALAAALGQIEKQFGKGSIMRLGEDRSMDVETISTGSLSLDIALGAGGLPMGRIVEIYGPESSGKTTLTLQVIAAAQREGKTCAFIDAEHALDPIYAKKLGVDIDNLLCSQPDTGEQALEICDALTRSGAVDVIIVDSVAALTPKAEIEGEIGDSHMGLAARMMSQAMRKLAGNLKQANTLLIFINQIRMKIGVMFGNPETTTGGNALKFYASVRLDIRRTGAIKEGEEVVGSETRVKVVKNKVAAPFKQAEFQILYGEGINIHGELVDLGVKHKLIEKAGAWYSYNGDKIGQGKANACNFLKENPAVAAELDKKLREMLLHKGNELTPATAGNSHDEDAFADEGNEEF.

67–74 (GPESSGKT) serves as a coordination point for ATP. Residues 333-357 (NELTPATAGNSHDEDAFADEGNEEF) are disordered. A compositionally biased stretch (acidic residues) spans 348-357 (AFADEGNEEF).

It belongs to the RecA family.

Its subcellular location is the cytoplasm. Can catalyze the hydrolysis of ATP in the presence of single-stranded DNA, the ATP-dependent uptake of single-stranded DNA by duplex DNA, and the ATP-dependent hybridization of homologous single-stranded DNAs. It interacts with LexA causing its activation and leading to its autocatalytic cleavage. In Pectobacterium carotovorum subsp. carotovorum (strain PC1), this protein is Protein RecA.